Here is a 65-residue protein sequence, read N- to C-terminus: Metallothionein-like protein 3B (65 aa).

This sequence belongs to the metallothionein superfamily. Type 15 family.

Functionally, metallothioneins have a high content of cysteine residues that bind various heavy metals. The chain is Metallothionein-like protein 3B (MT3B) from Oryza sativa subsp. indica (Rice).